Here is a 708-residue protein sequence, read N- to C-terminus: Ion-translocating oxidoreductase complex subunit C (708 aa).

2 4Fe-4S ferredoxin-type domains span residues 369 to 397 (GEPQ…QQLY) and 407 to 436 (KATT…VQYF). The [4Fe-4S] cluster site is built by C377, C380, C383, C387, C416, C419, C422, and C426. The segment at 630–682 (AKARKLEQQQANAEPEEQIDPRKAAVEAAIARAKARKLEQQQANAEPEEQIDP) is disordered.

Belongs to the 4Fe4S bacterial-type ferredoxin family. RnfC subfamily. In terms of assembly, the complex is composed of six subunits: RsxA, RsxB, RsxC, RsxD, RsxE and RsxG. It depends on [4Fe-4S] cluster as a cofactor.

The protein resides in the cell inner membrane. Its function is as follows. Part of a membrane-bound complex that couples electron transfer with translocation of ions across the membrane. Required to maintain the reduced state of SoxR. In Escherichia coli O1:K1 / APEC, this protein is Ion-translocating oxidoreductase complex subunit C.